A 465-amino-acid chain; its full sequence is UDP-glycosyltransferase 89A2 (465 aa).

Residues Ser291, 342–344 (VSQ), 359–367 (HCGWNSVLE), and 381–384 (EADQ) each bind UDP-alpha-D-glucose.

It belongs to the UDP-glycosyltransferase family.

Functionally, glucosyltransferase that glucosylates benzoates and benzoate derivatives in vitro. The protein is UDP-glycosyltransferase 89A2 (UGT89A2) of Arabidopsis thaliana (Mouse-ear cress).